The primary structure comprises 401 residues: Ribosomal RNA dihydrouridine synthase (401 aa).

FAD is bound by residues alanine 15, aspartate 34, asparagine 35, arginine 41, glycine 47, asparagine 52, valine 132, glutamate 371, and phenylalanine 384.

This sequence belongs to the BaiN/RdsA family. RdsA subfamily. FAD serves as cofactor.

The catalysed reaction is a 5,6-dihydrouridine in mRNA + NAD(+) = a uridine in mRNA + NADH + H(+). Catalyzes the synthesis of 5,6-dihydrouridine (D) at position 2449 in 23S rRNA. This is Ribosomal RNA dihydrouridine synthase from Haemophilus influenzae (strain ATCC 51907 / DSM 11121 / KW20 / Rd).